We begin with the raw amino-acid sequence, 181 residues long: ATP synthase subunit delta (181 aa).

The protein belongs to the ATPase delta chain family. In terms of assembly, F-type ATPases have 2 components, F(1) - the catalytic core - and F(0) - the membrane proton channel. F(1) has five subunits: alpha(3), beta(3), gamma(1), delta(1), epsilon(1). F(0) has three main subunits: a(1), b(2) and c(10-14). The alpha and beta chains form an alternating ring which encloses part of the gamma chain. F(1) is attached to F(0) by a central stalk formed by the gamma and epsilon chains, while a peripheral stalk is formed by the delta and b chains.

The protein localises to the cell membrane. Functionally, f(1)F(0) ATP synthase produces ATP from ADP in the presence of a proton or sodium gradient. F-type ATPases consist of two structural domains, F(1) containing the extramembraneous catalytic core and F(0) containing the membrane proton channel, linked together by a central stalk and a peripheral stalk. During catalysis, ATP synthesis in the catalytic domain of F(1) is coupled via a rotary mechanism of the central stalk subunits to proton translocation. Its function is as follows. This protein is part of the stalk that links CF(0) to CF(1). It either transmits conformational changes from CF(0) to CF(1) or is implicated in proton conduction. The protein is ATP synthase subunit delta of Lactiplantibacillus plantarum (strain ATCC BAA-793 / NCIMB 8826 / WCFS1) (Lactobacillus plantarum).